We begin with the raw amino-acid sequence, 331 residues long: Ketol-acid reductoisomerase (NADP(+)) (331 aa).

Residues 4–183 (ATIYYDDDAE…GCTRAGVVET (180 aa)) form the KARI N-terminal Rossmann domain. NADP(+)-binding positions include 27-30 (YGSQ), Arg50, Ser53, Ser55, and 85-88 (DTVQ). His109 is an active-site residue. Gly135 contributes to the NADP(+) binding site. Residues 184 to 329 (TFREETETDL…EDLRALFAWG (146 aa)) form the KARI C-terminal knotted domain. Residues Asp192, Glu196, Glu228, and Glu232 each contribute to the Mg(2+) site. Residue Ser253 coordinates substrate.

It belongs to the ketol-acid reductoisomerase family. The cofactor is Mg(2+).

The catalysed reaction is (2R)-2,3-dihydroxy-3-methylbutanoate + NADP(+) = (2S)-2-acetolactate + NADPH + H(+). It carries out the reaction (2R,3R)-2,3-dihydroxy-3-methylpentanoate + NADP(+) = (S)-2-ethyl-2-hydroxy-3-oxobutanoate + NADPH + H(+). Its pathway is amino-acid biosynthesis; L-isoleucine biosynthesis; L-isoleucine from 2-oxobutanoate: step 2/4. The protein operates within amino-acid biosynthesis; L-valine biosynthesis; L-valine from pyruvate: step 2/4. Involved in the biosynthesis of branched-chain amino acids (BCAA). Catalyzes an alkyl-migration followed by a ketol-acid reduction of (S)-2-acetolactate (S2AL) to yield (R)-2,3-dihydroxy-isovalerate. In the isomerase reaction, S2AL is rearranged via a Mg-dependent methyl migration to produce 3-hydroxy-3-methyl-2-ketobutyrate (HMKB). In the reductase reaction, this 2-ketoacid undergoes a metal-dependent reduction by NADPH to yield (R)-2,3-dihydroxy-isovalerate. In Natronomonas pharaonis (strain ATCC 35678 / DSM 2160 / CIP 103997 / JCM 8858 / NBRC 14720 / NCIMB 2260 / Gabara) (Halobacterium pharaonis), this protein is Ketol-acid reductoisomerase (NADP(+)).